Reading from the N-terminus, the 1395-residue chain is MREADEQYFETLETQLEAAFDVAERAKERGGDPKPEVEIPTARDMADRVENILGIDGVAERVRELEGQMSREEAALELVEDFVEGTVGDYDSREGKVEGAVRTAVALLTEGVVAAPIEGIDRVELLENDDGTEFINVYYAGPIRSAGGTAQALSVLVADYARALLGIDQYKAREEEIGRYAEEIDLYDKDTGLQYSPKEKETKFIAEHMPIMLDGEATGDEEVSGYRDLERVDSNSPRGGMCLVLAEGIALKAPKIQRYTRNLDEVDWPWLQDLIDGTIGKDEADEGDSAEDANGDDAGEGADDDGGDEADEQAGPPRVEPADKYLRDLIAGRPVFSHPSKSGGFRLRYGRSRNHGFATAGVHPATMHLVDDFLATGTQIKTERPGKAAGVVPVDTIEGPTVRLANGDVRRIDDAEEALAVRNGVEKILDLGEYLVNYGEFVENNHPLAPASYTVEWWEQDLAAAGADVQAMQDSPHIDLADPSAEEAIEWATEYDAPLHPKYTYLWHDVSIEQVCALADAVEDAQVAQADGAYADPEMDGTAGDAHSDDGALVLPRSDAVQQTLEHLLIGHTQDEETITVTDWVPLVRTLGFSRSLERDWTREDLSEHARTYGESESLDAIGVAEDAEREDGQNAIKAINEVAPFQVRERAPTRIGNRMGRPEKSERRDLSPAVHTLSPIGEAGGAQRDVAKATKHADDMSDTPGQVEVEVARRRCPDCGTETHQANCAECSGTTEPVYVCPDCEAEVERDESGRAECGRCETLASPTQYKVLDLQEAYRDALQNVGERETAFEQLKAVKGLTSEEKVPEPMEKGILRAKHDVSAFKDGTVRYDMTDLPVTAVRASELDVSAERLRGLGYTEDIHGDPLTHEDQLVELKVQDIVLSDGAAEHMLQTARFVDDLLEQYYGLERFYEFDDREDLVGELVFGMAPHTSAATVGRVVGFTSAAVGYAHPYFHAAKRRNCFHPDTRLWYEDENDDWEYGTIEELVESRLDDPQEDDFGTLVQELDGDLTVSSLGENGPCRQPVDAVSKHPAPDHLVEVAVGDRTLRVTPDHTMLRAGPDGIEEVPASDLAAGDDLPAYDGGETTTMTARGEASTAATDGAAPTDTVEAVEYVESDVDHVYCLTVADTHRVAVEGTYVGQCDGDEDCVMLLMDGLLNFSKSYLPNQRGGQMDAPLVMSSRIDPSEIDDEAHNMDIMDAYPREFYEATREMKDPTEVEDVMKIAEETLGTDREYTEFRHTHDTANIAAGPDLSAYKTLGSMEDKMDAQLEISRKLRAVVESDVAERIIEYHFLPDLIGNLRAFSRQEVRCLDCGESFRRAPLTGDCRECGGRVNLTVHEGSVNKYIDTAIRVADEFGARDYTKQRLKILERKIESVFENDHNKQSGIADFM.

2 disordered regions span residues 279–320 and 657–704; these read IGKD…PRVE and GNRM…MSDT. Acidic residues predominate over residues 283 to 312; sequence EADEGDSAEDANGDDAGEGADDDGGDEADE. 2 stretches are compositionally biased toward basic and acidic residues: residues 661–671 and 690–700; these read GRPEKSERRDL and DVAKATKHADD.

This sequence belongs to the archaeal DNA polymerase II family. As to quaternary structure, heterodimer of a large subunit and a small subunit. Post-translationally, this protein undergoes a protein self splicing that involves a post-translational excision of the intervening region (intein) followed by peptide ligation.

It catalyses the reaction DNA(n) + a 2'-deoxyribonucleoside 5'-triphosphate = DNA(n+1) + diphosphate. The catalysed reaction is Exonucleolytic cleavage in the 3'- to 5'-direction to yield nucleoside 5'-phosphates.. Its function is as follows. Possesses two activities: a DNA synthesis (polymerase) and an exonucleolytic activity that degrades single-stranded DNA in the 3'- to 5'-direction. Has a template-primer preference which is characteristic of a replicative DNA polymerase. The chain is DNA polymerase II large subunit from Haloarcula marismortui (strain ATCC 43049 / DSM 3752 / JCM 8966 / VKM B-1809) (Halobacterium marismortui).